A 378-amino-acid chain; its full sequence is MPLPSFLEVYEGLISTSSISSTDARWDEGNEQVIAKLADWLSALGFSIQIEQVAPNKQNLIAKLGSGEGGLLLAGHSDTVPFDEGRWNYNPHALTQVNNRFYGLGTADMKGFFAFIYEAVKNVDWSKQTKPLYVLATCDEETTMLGARHFTENAPFKPDYCIIGEPTSLVPIRAHKGHVANAIRVTGKSGHSSNPALGVNAIEIMHEVLFALMQLRDRLIKEYHHPGFEIPTPTLNLGHIHGGDSPNRICGCCELHYDVRPLPGISLDGLDNLMHDALREVQQKWPGRIELVPLHDPIPGYECAHDHPFIHGISEICEQEAQTVNYCTEAPFLQQVCPTLVLGPGSIDQAHQPDEFLAFEFIDPTVRVLSRAMQKYCF.

Residue His76 participates in Zn(2+) binding. Residue Asp78 is part of the active site. A Zn(2+)-binding site is contributed by Asp108. Residue Glu140 is part of the active site. The Zn(2+) site is built by Glu141, Glu165, and His351.

It belongs to the peptidase M20A family. ArgE subfamily. Homodimer. It depends on Zn(2+) as a cofactor. Co(2+) serves as cofactor. Requires glutathione as cofactor.

The protein localises to the cytoplasm. It catalyses the reaction N(2)-acetyl-L-ornithine + H2O = L-ornithine + acetate. It functions in the pathway amino-acid biosynthesis; L-arginine biosynthesis; L-ornithine from N(2)-acetyl-L-ornithine (linear): step 1/1. Its function is as follows. Catalyzes the hydrolysis of the amide bond of N(2)-acetylated L-amino acids. Cleaves the acetyl group from N-acetyl-L-ornithine to form L-ornithine, an intermediate in L-arginine biosynthesis pathway, and a branchpoint in the synthesis of polyamines. The protein is Acetylornithine deacetylase of Vibrio cholerae serotype O1 (strain ATCC 39541 / Classical Ogawa 395 / O395).